A 51-amino-acid chain; its full sequence is MIRLQHDKQKQMRYGTLQKRDTLTLCLLKLQLMEWRFDSAWKFGLGRLYLG.

Functionally, a short protein whose stop codon overlaps with the start codon of downstream rpoE; a premature stop codon at position 12 results in decreased expression of ECF sigma factor RpoE, thus they are translationally coupled. This chain is rpoE leader peptide, found in Escherichia coli (strain K12).